A 435-amino-acid polypeptide reads, in one-letter code: Hexane cyclase xenF (435 aa).

The N-terminal stretch at 1–23 (MSPAANMFRTLTLTALVSAVVSA) is a signal peptide. Residues Asn-81 and Asn-156 are each glycosylated (N-linked (GlcNAc...) asparagine).

Belongs to the Diels-Alderase family.

It functions in the pathway mycotoxin biosynthesis. In terms of biological role, hexane cyclase; part of the gene cluster that mediates the biosynthesis of xenoacremones such as xenoacremone A, a compound that shows inhibitory activity toward the PI3K/AKT signaling pathway and which has the ability to induce apoptosis of A549 lung cancer cells. Within the pathway, cooperation of the hybrid PKS-NRPS xenE and the trans-acting enoyl reductase xenG is responsible for the formation of the reduced tyrosine-nonaketide derivative. The alpha/beta hydrolase xenA then accelerates intramolecular nucleophilic attack to give a pyrrolidone derivative. Subsequently, three enzymes, xenF, xenD, and xenC, coordinately participate in the conversion to xenoacremone B. XenF catalyzes sigmatropic rearrangement to form an A-ring, which leads to an unusual intermediate with a hexane ring, which is required for the formation of the tricarbocyclic product. Epoxidation catalyzed by xenD and the formation of the paracyclophane ether catalyzed by xenC initiate a spontaneous intramolecular Diels-Alder (IMDA) reaction to yield xenoacremone B. Spontaneous hydration of xenoacremone B leads to the formation of xenoacremone A, which undergoes subsequent methylation to afford xenoacremone C. This chain is Hexane cyclase xenF, found in Xenoacremonium sinensis (Endophyte fungus).